A 254-amino-acid chain; its full sequence is Pimeloyl-[acyl-carrier protein] methyl ester esterase (254 aa).

The region spanning 16 to 242 (LVLIHGWGMN…ASHAPFISHP (227 aa)) is the AB hydrolase-1 domain. Substrate is bound by residues Trp22, 82–83 (SL), and 143–147 (FLALQ). Ser82 serves as the catalytic Nucleophile. Catalysis depends on residues Asp207 and His235. Residue His235 participates in substrate binding.

It belongs to the AB hydrolase superfamily. Carboxylesterase BioH family. In terms of assembly, monomer.

It is found in the cytoplasm. The enzyme catalyses 6-carboxyhexanoyl-[ACP] methyl ester + H2O = 6-carboxyhexanoyl-[ACP] + methanol + H(+). Its pathway is cofactor biosynthesis; biotin biosynthesis. Functionally, the physiological role of BioH is to remove the methyl group introduced by BioC when the pimeloyl moiety is complete. It allows to synthesize pimeloyl-ACP via the fatty acid synthetic pathway through the hydrolysis of the ester bonds of pimeloyl-ACP esters. The protein is Pimeloyl-[acyl-carrier protein] methyl ester esterase of Photobacterium profundum (strain SS9).